Here is a 1710-residue protein sequence, read N- to C-terminus: Centrosomal protein of 152 kDa (1710 aa).

3 disordered regions span residues 1–27, 39–79, and 108–139; these read MSLD…YERE, HDML…NEQM, and NRSK…SKCE. The interaction with PLK4 stretch occupies residues 1–60; the sequence is MSLDFGSVALPVQNEDEEYDEEDYEREKELQQLLTDLPHDMLDDDLSSPELQYSDCSEDG. The segment covering 14–24 has biased composition (acidic residues); it reads NEDEEYDEEDY. Residues 108 to 123 are compositionally biased toward basic and acidic residues; it reads NRSKTEDRHPVYHPEE. A coiled-coil region spans residues 234–490; that stretch reads ENMQIIQLQV…ISLYESAAKL (257 aa). A compositionally biased stretch (basic and acidic residues) spans 587–604; the sequence is DEKSIEVETKTDTSEKPK. Positions 587 to 611 are disordered; the sequence is DEKSIEVETKTDTSEKPKNQLWPES. Coiled-coil stretches lie at residues 615 to 664, 700 to 772, and 902 to 993; these read DVVR…QDFD, EKQQ…LEKE, and AVSE…INEV. The interval 1120–1142 is disordered; it reads ELSKDSASQGTGQGDPGPAAGHH. A coiled-coil region spans residues 1170-1241; the sequence is HCFQELEKAK…LEELQTLCKT (72 aa). Phosphothreonine is present on T1241.

The protein belongs to the CEP152 family. Interacts (via N-terminus) with PLK4; the interaction is mutally exclusive with a PLK4:CEP192 interaction. Interacts (via C-terminus) with CPAP (via-N-terminus). Interacts with CINP. Interacts with CDK5RAP2, WDR62, CEP63 and CEP131. CEP63, CDK5RAP2, CEP152, WDR62 are proposed to form a stepwise assembled complex at the centrosome forming a ring near parental centrioles. Interacts with DEUP1; this interaction recruits CEP152 to the deuterosome. The interactions with CEP63 and DEUP1 are mutually exclusive. Interacts with CCDC66.

It localises to the cytoplasm. The protein resides in the cytoskeleton. Its subcellular location is the microtubule organizing center. It is found in the centrosome. The protein localises to the centriole. Functionally, necessary for centrosome duplication; the function also seems to involve CEP63, CDK5RAP2 and WDR62 through a stepwise assembled complex at the centrosome that recruits CDK2 required for centriole duplication. Acts as a molecular scaffold facilitating the interaction of PLK4 and CPAP, 2 molecules involved in centriole formation. Proposed to snatch PLK4 away from PLK4:CEP92 complexes in early G1 daughter centriole and to reposition PLK4 at the outer boundary of a newly forming CEP152 ring structure. Also plays a key role in deuterosome-mediated centriole amplification in multiciliated that can generate more than 100 centrioles. Overexpression of CEP152 can drive amplification of centrioles. The chain is Centrosomal protein of 152 kDa from Homo sapiens (Human).